Here is a 131-residue protein sequence, read N- to C-terminus: Small ribosomal subunit protein uS11 (131 aa).

The protein belongs to the universal ribosomal protein uS11 family. As to quaternary structure, part of the 30S ribosomal subunit. Interacts with proteins S7 and S18. Binds to IF-3.

In terms of biological role, located on the platform of the 30S subunit, it bridges several disparate RNA helices of the 16S rRNA. Forms part of the Shine-Dalgarno cleft in the 70S ribosome. This is Small ribosomal subunit protein uS11 from Paramagnetospirillum magneticum (strain ATCC 700264 / AMB-1) (Magnetospirillum magneticum).